We begin with the raw amino-acid sequence, 356 residues long: UDP-N-acetylglucosamine--N-acetylmuramyl-(pentapeptide) pyrophosphoryl-undecaprenol N-acetylglucosamine transferase (356 aa).

UDP-N-acetyl-alpha-D-glucosamine-binding positions include 12-14, Asn124, Arg163, Ser188, Ile242, and Gln287; that span reads TGG.

It belongs to the glycosyltransferase 28 family. MurG subfamily.

Its subcellular location is the cell inner membrane. It catalyses the reaction di-trans,octa-cis-undecaprenyl diphospho-N-acetyl-alpha-D-muramoyl-L-alanyl-D-glutamyl-meso-2,6-diaminopimeloyl-D-alanyl-D-alanine + UDP-N-acetyl-alpha-D-glucosamine = di-trans,octa-cis-undecaprenyl diphospho-[N-acetyl-alpha-D-glucosaminyl-(1-&gt;4)]-N-acetyl-alpha-D-muramoyl-L-alanyl-D-glutamyl-meso-2,6-diaminopimeloyl-D-alanyl-D-alanine + UDP + H(+). It participates in cell wall biogenesis; peptidoglycan biosynthesis. In terms of biological role, cell wall formation. Catalyzes the transfer of a GlcNAc subunit on undecaprenyl-pyrophosphoryl-MurNAc-pentapeptide (lipid intermediate I) to form undecaprenyl-pyrophosphoryl-MurNAc-(pentapeptide)GlcNAc (lipid intermediate II). This Pseudomonas syringae pv. tomato (strain ATCC BAA-871 / DC3000) protein is UDP-N-acetylglucosamine--N-acetylmuramyl-(pentapeptide) pyrophosphoryl-undecaprenol N-acetylglucosamine transferase.